A 334-amino-acid chain; its full sequence is L-lactate dehydrogenase B chain (334 aa).

NAD(+) contacts are provided by residues 30-58 (GQVG…LEDK) and Arg100. Residues Arg107, Asn139, and Arg170 each coordinate substrate. NAD(+) is bound at residue Asn139. The active-site Proton acceptor is the His194. Thr249 is a binding site for substrate.

Belongs to the LDH/MDH superfamily. LDH family. Homotetramer.

Its subcellular location is the cytoplasm. The catalysed reaction is (S)-lactate + NAD(+) = pyruvate + NADH + H(+). The protein operates within fermentation; pyruvate fermentation to lactate; (S)-lactate from pyruvate: step 1/1. In terms of biological role, interconverts simultaneously and stereospecifically pyruvate and lactate with concomitant interconversion of NADH and NAD(+). The protein is L-lactate dehydrogenase B chain (ldhb) of Squalus acanthias (Spiny dogfish).